The sequence spans 224 residues: ATP-dependent dethiobiotin synthetase BioD (224 aa).

12 to 17 (GVGKTF) contacts ATP. Mg(2+) is bound at residue threonine 16. Lysine 37 is an active-site residue. Threonine 41 provides a ligand contact to substrate. Glutamate 107 serves as a coordination point for Mg(2+). ATP is bound by residues 107 to 110 (EGAG), 167 to 168 (GS), 197 to 199 (PEG), and glutamate 204.

The protein belongs to the dethiobiotin synthetase family. As to quaternary structure, homodimer. Requires Mg(2+) as cofactor.

Its subcellular location is the cytoplasm. It catalyses the reaction (7R,8S)-7,8-diammoniononanoate + CO2 + ATP = (4R,5S)-dethiobiotin + ADP + phosphate + 3 H(+). Its pathway is cofactor biosynthesis; biotin biosynthesis; biotin from 7,8-diaminononanoate: step 1/2. Its function is as follows. Catalyzes a mechanistically unusual reaction, the ATP-dependent insertion of CO2 between the N7 and N8 nitrogen atoms of 7,8-diaminopelargonic acid (DAPA, also called 7,8-diammoniononanoate) to form a ureido ring. The sequence is that of ATP-dependent dethiobiotin synthetase BioD from Corynebacterium glutamicum (strain R).